Here is a 182-residue protein sequence, read N- to C-terminus: MRCPYCGGLDTQVRDSRPTEDNTAIRRRRICPDCGGRFTTFERVQLRELMVLKRSGRRVPFDRDKLARSVDVALRKRPVDGERVERMLSGIVRQLESMGDSDITSQTIGEMVMEGLKQLDDVAYVRFASVYRNFREAKDFENALAELSQPELAQSDDVKAEGGAEGGRDKPKAAGKPPRSAE.

A disordered region spans residues 1–24 (MRCPYCGGLDTQVRDSRPTEDNTA). A zinc finger spans residues 3-34 (CPYCGGLDTQVRDSRPTEDNTAIRRRRICPDC). Positions 12-24 (QVRDSRPTEDNTA) are enriched in basic and acidic residues. Residues 49 to 139 (LMVLKRSGRR…VYRNFREAKD (91 aa)) form the ATP-cone domain. The disordered stretch occupies residues 146-182 (ELSQPELAQSDDVKAEGGAEGGRDKPKAAGKPPRSAE). A compositionally biased stretch (basic and acidic residues) spans 156-172 (DDVKAEGGAEGGRDKPK).

The protein belongs to the NrdR family. It depends on Zn(2+) as a cofactor.

In terms of biological role, negatively regulates transcription of bacterial ribonucleotide reductase nrd genes and operons by binding to NrdR-boxes. The protein is Transcriptional repressor NrdR of Xanthobacter autotrophicus (strain ATCC BAA-1158 / Py2).